The primary structure comprises 292 residues: Elongation factor Ts (292 aa).

Positions 79–82 (TDFV) are involved in Mg(2+) ion dislocation from EF-Tu.

The protein belongs to the EF-Ts family.

It is found in the cytoplasm. In terms of biological role, associates with the EF-Tu.GDP complex and induces the exchange of GDP to GTP. It remains bound to the aminoacyl-tRNA.EF-Tu.GTP complex up to the GTP hydrolysis stage on the ribosome. The chain is Elongation factor Ts from Xylella fastidiosa (strain Temecula1 / ATCC 700964).